Reading from the N-terminus, the 216-residue chain is Pyrrolidone-carboxylate peptidase (216 aa).

Active-site residues include Glu80, Cys143, and His167.

It belongs to the peptidase C15 family. In terms of assembly, homotetramer.

Its subcellular location is the cytoplasm. It carries out the reaction Release of an N-terminal pyroglutamyl group from a polypeptide, the second amino acid generally not being Pro.. Functionally, removes 5-oxoproline from various penultimate amino acid residues except L-proline. This Streptomyces coelicolor (strain ATCC BAA-471 / A3(2) / M145) protein is Pyrrolidone-carboxylate peptidase (pcp).